Consider the following 1180-residue polypeptide: Pesticidal crystal protein Cry4Aa (1180 aa).

The protein belongs to the delta endotoxin family.

Its function is as follows. Promotes colloidosmotic lysis by binding to the midgut epithelial cells of insects. The chain is Pesticidal crystal protein Cry4Aa (cry4Aa) from Bacillus thuringiensis subsp. israelensis.